We begin with the raw amino-acid sequence, 413 residues long: Glucose-1-phosphate adenylyltransferase (413 aa).

Alpha-D-glucose 1-phosphate is bound by residues Gly161, 176–177 (EK), and Ser195.

It belongs to the bacterial/plant glucose-1-phosphate adenylyltransferase family. In terms of assembly, homotetramer.

It carries out the reaction alpha-D-glucose 1-phosphate + ATP + H(+) = ADP-alpha-D-glucose + diphosphate. Its pathway is glycan biosynthesis; glycogen biosynthesis. In terms of biological role, involved in the biosynthesis of ADP-glucose, a building block required for the elongation reactions to produce glycogen. Catalyzes the reaction between ATP and alpha-D-glucose 1-phosphate (G1P) to produce pyrophosphate and ADP-Glc. The chain is Glucose-1-phosphate adenylyltransferase from Anaeromyxobacter dehalogenans (strain 2CP-C).